A 173-amino-acid polypeptide reads, in one-letter code: Globin, cuticular isoform (173 aa).

The first 16 residues, 1–16 (MLWFVAVCFAIASVSA), serve as a signal peptide directing secretion. In terms of domain architecture, Globin spans 17–166 (MSPADVKKHT…FNSEAQHQLE (150 aa)). Residue H113 coordinates heme b.

Belongs to the globin family. Expressed only by adult nematodes in the gut.

It is found in the secreted. The protein localises to the extracellular space. The chain is Globin, cuticular isoform (GLBC) from Nippostrongylus brasiliensis (Rat hookworm).